We begin with the raw amino-acid sequence, 142 residues long: Galectin-16 (142 aa).

The region spanning 6–138 (VPYKLPVSLS…DVSLDSVLVN (133 aa)) is the Galectin domain.

In terms of tissue distribution, predominantly and highly expressed in the placenta where it is localized mainly in the syncytiotrophoblast and in the endothelia of fetal vessels. Also detected in the amnion and chorionic trophoblasts in fetal membranes.

Its function is as follows. Binds lactose with high affinity. Strong inducer of T-cell apoptosis. The chain is Galectin-16 from Homo sapiens (Human).